A 489-amino-acid polypeptide reads, in one-letter code: Capsid protein (489 aa).

A disordered region spans residues 79-144 (GETSEEESDS…QPKTIPGQKQ (66 aa)). The segment covering 81 to 94 (TSEEESDSGEEPEF) has biased composition (acidic residues). The span at 95–110 (EQVRMDRTGGTEIPKE) shows a compositional bias: basic and acidic residues. The Nuclear localization signal motif lies at 122 to 125 (RKRK). Over residues 135–144 (QPKTIPGQKQ) the composition is skewed to polar residues. The segment at 412-429 (CRCWICNIEGHYANECPN) adopts a CCHC-type zinc-finger fold. Positions 467 to 489 (EEEEETSTEESDGSSTSEDSDSD) are disordered.

The protein belongs to the caulimoviridae capsid protein family. Interacts (via nuclear localization signal) with host importin alpha.

It is found in the virion. The protein localises to the host nucleus. Its function is as follows. Self assembles to form an icosahedral capsid, about 50 nm in diameter, nm, composed of 420 subunits of the viral capsid protein. The capsid encapsulates the genomic dsDNA. Following virus entry into host cell, provides nuclear import of the viral genome. Virus particles do not enter the nucleus, but dock at the nuclear membrane through the interaction with host importins. The polypeptide is Capsid protein (Arabidopsis thaliana (Mouse-ear cress)).